A 176-amino-acid polypeptide reads, in one-letter code: Inorganic pyrophosphatase (176 aa).

Residues lysine 30, arginine 44, and tyrosine 56 each coordinate substrate. Mg(2+)-binding residues include aspartate 66, aspartate 71, and aspartate 103. Tyrosine 142 is a binding site for substrate.

Belongs to the PPase family. Homohexamer. Mg(2+) serves as cofactor.

The protein localises to the cytoplasm. It catalyses the reaction diphosphate + H2O = 2 phosphate + H(+). In terms of biological role, catalyzes the hydrolysis of inorganic pyrophosphate (PPi) forming two phosphate ions. The chain is Inorganic pyrophosphatase from Aeropyrum pernix (strain ATCC 700893 / DSM 11879 / JCM 9820 / NBRC 100138 / K1).